The primary structure comprises 128 residues: uncharacterized protein (128 aa).

This is an uncharacterized protein from Homo sapiens (Human).